Reading from the N-terminus, the 161-residue chain is 2-C-methyl-D-erythritol 2,4-cyclodiphosphate synthase (161 aa).

Positions 11 and 13 each coordinate a divalent metal cation. Residues 11–13 (DIH) and 37–38 (HS) contribute to the 4-CDP-2-C-methyl-D-erythritol 2-phosphate site. An a divalent metal cation-binding site is contributed by histidine 45. 4-CDP-2-C-methyl-D-erythritol 2-phosphate-binding positions include 59–61 (DIG), 135–138 (TTNE), and arginine 145.

This sequence belongs to the IspF family. As to quaternary structure, homotrimer. A divalent metal cation is required as a cofactor.

It carries out the reaction 4-CDP-2-C-methyl-D-erythritol 2-phosphate = 2-C-methyl-D-erythritol 2,4-cyclic diphosphate + CMP. It participates in isoprenoid biosynthesis; isopentenyl diphosphate biosynthesis via DXP pathway; isopentenyl diphosphate from 1-deoxy-D-xylulose 5-phosphate: step 4/6. Involved in the biosynthesis of isopentenyl diphosphate (IPP) and dimethylallyl diphosphate (DMAPP), two major building blocks of isoprenoid compounds. Catalyzes the conversion of 4-diphosphocytidyl-2-C-methyl-D-erythritol 2-phosphate (CDP-ME2P) to 2-C-methyl-D-erythritol 2,4-cyclodiphosphate (ME-CPP) with a corresponding release of cytidine 5-monophosphate (CMP). The protein is 2-C-methyl-D-erythritol 2,4-cyclodiphosphate synthase of Synechocystis sp. (strain ATCC 27184 / PCC 6803 / Kazusa).